Here is a 204-residue protein sequence, read N- to C-terminus: Holliday junction branch migration complex subunit RuvA (204 aa).

A domain I region spans residues 1–64 (MISRMKGIIL…EDAQLLYGFH (64 aa)). A domain II region spans residues 65 to 143 (HPKERAMFSE…NLNKNLFKST (79 aa)). Positions 144–155 (ADHMLSSVSTDL) are flexible linker. The tract at residues 156 to 204 (SAKSAEAEAISALISLGYKPQEAAQLIKNIAQPDLDSQALIKHALRSTL) is domain III.

Belongs to the RuvA family. Homotetramer. Forms an RuvA(8)-RuvB(12)-Holliday junction (HJ) complex. HJ DNA is sandwiched between 2 RuvA tetramers; dsDNA enters through RuvA and exits via RuvB. An RuvB hexamer assembles on each DNA strand where it exits the tetramer. Each RuvB hexamer is contacted by two RuvA subunits (via domain III) on 2 adjacent RuvB subunits; this complex drives branch migration. In the full resolvosome a probable DNA-RuvA(4)-RuvB(12)-RuvC(2) complex forms which resolves the HJ.

The protein resides in the cytoplasm. Functionally, the RuvA-RuvB-RuvC complex processes Holliday junction (HJ) DNA during genetic recombination and DNA repair, while the RuvA-RuvB complex plays an important role in the rescue of blocked DNA replication forks via replication fork reversal (RFR). RuvA specifically binds to HJ cruciform DNA, conferring on it an open structure. The RuvB hexamer acts as an ATP-dependent pump, pulling dsDNA into and through the RuvAB complex. HJ branch migration allows RuvC to scan DNA until it finds its consensus sequence, where it cleaves and resolves the cruciform DNA. This Hamiltonella defensa subsp. Acyrthosiphon pisum (strain 5AT) protein is Holliday junction branch migration complex subunit RuvA.